The primary structure comprises 238 residues: Beta-glucanase (238 aa).

A signal peptide spans 1–26 (MMKKKSWFTLMITGVISLFFSVSAFA). The region spanning 29-238 (VFWEPLSYFN…EYDWVKYTSN (210 aa)) is the GH16 domain. A disulfide bridge connects residues C56 and C85. The active-site Nucleophile is the E129. E133 acts as the Proton donor in catalysis.

The protein belongs to the glycosyl hydrolase 16 family.

The catalysed reaction is Hydrolysis of (1-&gt;4)-beta-D-glucosidic linkages in beta-D-glucans containing (1-&gt;3)- and (1-&gt;4)-bonds.. The sequence is that of Beta-glucanase (gluB) from Paenibacillus polymyxa (Bacillus polymyxa).